A 3726-amino-acid chain; its full sequence is MGRSKFPGKPSKSINRKRISVLQLEDDAANPAEPQQPAPESQQPSGSGSGSSAAREKGNNCDNDEDDNAPGGASISGNTASSSAGSGNSGNGSSSGSSTGSGSSGSGSTNGGSVNGGTHHKSAANLDKEAVTKDQNGDGDKTRGNVSSAPSGKLSAAASGKALSKSSRTFSASTSVTSSGRSSGSSPDGNSGASSDGASSGISCGKSTAKSTEASSGKLAKTTGAGTCSSAKSSKASSGTTSEATTSGLSGACLKALFVATPATSTGLACALVSPGGSSQGGTFPISAALLRARKNSNKKFKNLNLARGEVMLPSTSKLKQLNSPVVDNPSPSPPIASGSTPSVEGGIGVGGVVSPGEDAALKRVLTEMPNEVARDPSPSSCTAAANGAASGKGSASNGPPAMASSGDGSSPKSGADTGPSTSSTTAKQKKTVTFRNVLETSDDKSVVKRFYNPDIRIPIVSIMKKDSLNRPLNYSRGGECIVRPSILSKILNKNSNIDKLNSLKFRSAGASSSSSNQESGSSSNVFGLSRAFGAPMDEDDEGGVTFRRNDSPEDQNNAEDDEMDDDDDDEEAEEDDENEDDNDEAVSEKSAETEKSAGADERDPDEKQLVMDSHFVLPKRSTRSSRIIKPNKRLLEEGAISTKKPLSLGDSKGKNVFGTSSSSAGSTASTFSASTNLKLGKETFFNFGTLKPNSSAAGNFVLRQPRLQFQADNQQATFTAPKACPTSPSAIPKPANSLATSSFGSLASTNSSTVTPTPSACSICSAVVSSKEVTQARKYGVVACDVCRKFFSKMTKKSISANSSTANTSSGSQQYLQCKGNEGSPCSIHSAKSQLKNFKKFYKDRCTACWLKKCMISFQLPAAHRSRLSAILPPGMRGEAAAREEKSAELLSPTGSLRFTSTASSSSPSVVASTSVKWKSSGDSTSALTSIKPNPLAENNVTFGSTPLLRPAILENPLFLKISNAADQKLAAAEAISPSLTKKNSKQEKEKVKESEQSEKLLSPTQAGTKKSGAAEAQVEEVQPQKEEAPQTSTTTQPSASNGASHGVPQAELAGETNATGDTLKRQRIDLKGPRVKHVCRSASIVLGQPLATFGEDQQPEDAADMQQEIAAPVPSAIMEPSPEKPTHIVTDENDNCASCKTSPVGDESKPSKSSGSAQAEVKKATALGKEGTASAAGGSSAKVTTRNAAVASNLIVAASKKQRNGDIATSSSVTQSSNQTQGRKTKEHRQQRTLISIDFWENYDPAEVCQTGFGLIVTETVAQRALCFLCGSTGLDPLIFCACCCEPYHQYCVQDEYNLKHGSFEDTTLMGSLLETTVNASTGPSSSLNQLTQRLNWLCPRCTVCYTCNMSSGSKVKCQKCQKNYHSTCLGTSKRLLGADRPLICVNCLKCKSCSTTKVSKFVGNLPMCTGCFKLRKKGNFCPICQRCYDDNDFDLKMMECGDCGQWVHSKCEGLSDEQYNLLSTLPESIEFICKKCARRNESSKIKAEEWRQAVMEEFKASLYSVLKLLSKSRQACALLKLSPRKKLRCTCGASSNQGKLQPKALQFSSGSDNGLGSDGESQNSDDVYEFKDQQQQQQQRNANMNKPRVKSLPCSCQQHISHSQSFSLVDIKQKIAGNSYVSLAEFNYDMSQVIQQSNCDELDIAYKELLSEQFPWFQNETKACTDALEEDMFESCSGGNYEDLQDTGGVSASVYNEHSTSQAESRSGVLDIPLEEVDDFGSCGIKMRLDTRMCLFCRKSGEGLSGEEARLLYCGHDCWVHTNCAMWSAEVFEEIDGSLQNVHSAVARGRMIKCTVCGNRGATVGCNVRSCGEHYHYPCARSIDCAFLTDKSMYCPAHAKNGNALKANGSPSVTYESNFEVSRPVYVELDRKRKKLIEPARVQFHIGSLEVRQLGAIVPRFSDSYEAVVPINFLCSRLYWSSKEPWKIVEYTVRTTIQNSSSTLTALDVGRNYTVDHTNPNSKEVQLGMAQIARWHTSLARSEFLENGGTDWSGEFPNPNSCVPPDENTEEEPQQQADLLPPELKDAIFEDLPHELLDGISMLDIFLYDDKTDLFAISEQSKDGTQAMTSNQAQNQNQQAGGANSVSICDEDTRNSNTSLGNGWPASNPVEDAMLSAARNSSQVQMLKTLAWPKLDGNSAMATAIKRRKLSKNLAEGVFLTLSSQQRNKKEMATVAGVSRRQSISETSVEGVATTSGSVRSKSFTWSAAKRYFEKSEGREEAAKMRIMQMDGVDDSITEFRIISGDGNLSTAQFSGQVKCDRCQCTYRNYDAFQRHLPSCSPTMSSNETESDVSGQGMTNNATQISAESLNELQKQLLANAGGLNYLQSATSFPQVQSLGSLGQFGLQGLQQLQLQPQSLGSGFFLSQPNPATQANTDDLQIYANSLQSLAANLGGGFTLAQPTVTAPAQPQLIAVSTNPDGTQQFIQIPQTMQATTTPTATYQTLQATNTDKKIMLPLTAAGKPLKTVATKAAQQAAVKQRQLKSGHQVKPIQAKLQPHPQQHQQQQQTQVQQPITVMGQNLLQPQLLFQSSTQTQAPQIILPQAQPQNIISFVTGDGSQGQPLQYISIPTAGEYKPQPQPTATPTFLTTAPGAGATYLQTDASGNLVLTTTPSNSGLQMLTAQSLQAQPQVIGTLIQPQTIQLGGGADGNQPGSNQQPLILGGTGGGSSGLEFATTSPQVILATQPMYYGLETIVQNTVMSSQQFVSTAMPGMLSQNASFSATTTQVFQASKIEPIVDLPAGYVVLNNTGDASSAGTFLNAASVLQQQTQDDTTTQILQNANFQFQSVPTSSGASTSMDYTSPVMVTAKIPPVTQIKRTNAQAKAAGISGVGKVPPQPQVVNKVLPTSIVTQQSQVQVKNSNLKQSQVKGKAASGTGTTCGAPPSIASKPLQKKTNMIRPIHKLEVKPKVMKPTPKVQNQNHSLLQQQQQQQPQLQQQIPAVVVNQVPKVTISQQRIPAQTQQQQLQQAQMIHIPQQQQPLQQQQVQVQPSMPIITLAEAPVVQSQFVMEPQALEQQELANRVQHFSTSSSSSSSNCSLPTNVVNPMQQQAPSTTSSSTTRPTNRVLPMQQRQEPAPLSNECPVVSSPTPPKPVEQPIIHQMTSASVSKCYAQKSTLPSPVYEAELKVSSVLESIVPDVTMDAILEEQPVTESIYTEGLYEKNSPGESKTEQLLLQQQQREQLNQQLVNNGYLLDKHTFQVEPMDTDVYREEDLEEEEDEDDDFSLKMATSACNDHEMSDSEEPAVKDKISKILDNLTNDDCADSIATATTMEVDASAGYQQMVEDVLATTAAQSAPTEEFEGALETAAVEAAATYINEMADAHVLDLKQLQNGVELELRRRKEEQRTVSQEQEQSKAAIVPTAAAPEPPQPIQEPKKMTGPHLLYEIQSEDGFTYKSSSITEIWEKVFEAVQVARRAHGLTPLPEGPLADMGGIQMIGLKTNALKYLIEQLPGVEKCSKYTPKYHKRNGNVSTAANGAHGGNLGGSSASAALSVSGGDSHGLLDYGSDQDELEENAYDCARCEPYSNRSEYDMFSWLASRHRKQPIQVFVQPSDNELVPRRGTGSNLPMAMKYRTLKETYKDYVGVFRSHIHGRGLYCTKDIEAGEMVIEYAGELIRSTLTDKRERYYDSRGIGCYMFKIDDNLVVDATMRGNAARFINHCCEPNCYSKVVDILGHKHIIIFALRRIVQGEELTYDYKFPFEDEKIPCSCGSKRCRKYLN.

Disordered stretches follow at residues 1 to 247, 321 to 352, 371 to 429, and 509 to 624; these read MGRS…ATTS, QLNSPVVDNPSPSPPIASGSTPSVEGGIGVGG, NEVA…TAKQ, and AGAS…RSTR. Composition is skewed to low complexity over residues 31–53 and 71–101; these read PAEPQQPAPESQQPSGSGSGSSA and GGASISGNTASSSAGSGNSGNGSSSGSSTGS. The segment covering 102–115 has biased composition (gly residues); sequence GSSGSGSTNGGSVN. Residues 126-143 show a composition bias toward basic and acidic residues; the sequence is LDKEAVTKDQNGDGDKTR. Over residues 147–205 the composition is skewed to low complexity; it reads SSAPSGKLSAAASGKALSKSSRTFSASTSVTSSGRSSGSSPDGNSGASSDGASSGISCG. Over residues 206 to 215 the composition is skewed to polar residues; it reads KSTAKSTEAS. Over residues 222-247 the composition is skewed to low complexity; it reads TTGAGTCSSAKSSKASSGTTSEATTS. Low complexity-rich tracts occupy residues 384–402 and 509–525; these read AAANGAASGKGSASNGPPA and AGASSSSSNQESGSSSN. The span at 553-586 shows a compositional bias: acidic residues; the sequence is PEDQNNAEDDEMDDDDDDEEAEEDDENEDDNDEA. Positions 587 to 610 are enriched in basic and acidic residues; the sequence is VSEKSAETEKSAGADERDPDEKQL. Positions 759–884 form a DNA-binding region, nuclear receptor; that stretch reads PSACSICSAV…PGMRGEAAAR (126 aa). 4 disordered regions span residues 915-937, 981-1049, 1115-1184, and 1208-1231; these read TSVKWKSSGDSTSALTSIKPNPL, LTKK…SHGV, VPSA…SSAK, and DIATSSSVTQSSNQTQGRKTKEHR. The span at 918–937 shows a compositional bias: polar residues; the sequence is KWKSSGDSTSALTSIKPNPL. A compositionally biased stretch (basic and acidic residues) spans 986-1000; that stretch reads SKQEKEKVKESEQSE. Positions 1031-1041 are enriched in low complexity; that stretch reads PQTSTTTQPSA. A compositionally biased stretch (basic and acidic residues) spans 1123–1132; it reads SPEKPTHIVT. Low complexity-rich tracts occupy residues 1173–1183 and 1211–1223; these read GTASAAGGSSA and TSSSVTQSSNQTQ. 3 PHD-type zinc fingers span residues 1266–1347, 1348–1393, and 1421–1482; these read RALC…CTVC, YTCN…CLKC, and GNFC…CARR. In terms of domain architecture, Bromo spans 1496–1663; the sequence is AVMEEFKASL…SEQFPWFQNE (168 aa). The disordered stretch occupies residues 1573 to 1592; sequence FKDQQQQQQQRNANMNKPRV. Residues 1734–1774 form a C2HC pre-PHD-type zinc finger; sequence TRMCLFCRKSGEGLSGEEARLLYCGHDCWVHTNCAMWSAEV. The PHD-type 4 zinc-finger motif lies at 1795–1842; that stretch reads IKCTVCGNRGATVGCNVRSCGEHYHYPCARSIDCAFLTDKSMYCPAHA. An FYR N-terminal domain is found at 1884-1941; it reads RVQFHIGSLEVRQLGAIVPRFSDSYEAVVPINFLCSRLYWSSKEPWKIVEYTVRTTIQ. Disordered stretches follow at residues 1991–2019, 2068–2110, 2283–2302, 2649–2669, 2866–2894, 3029–3096, and 3347–3381; these read GGTDWSGEFPNPNSCVPPDENTEEEPQQQ, TQAM…WPAS, CSPTMSSNETESDVSGQGMT, GGGADGNQPGSNQQPLILGGT, SNLKQSQVKGKAASGTGTTCGAPPSIASK, QHFS…PTPP, and RKEEQRTVSQEQEQSKAAIVPTAAAPEPPQPIQEP. Residues 2074-2087 show a composition bias toward low complexity; the sequence is NQAQNQNQQAGGAN. Positions 3032–3043 are enriched in low complexity; that stretch reads STSSSSSSSNCS. Positions 3044 to 3057 are enriched in polar residues; it reads LPTNVVNPMQQQAP. The region spanning 3386–3470 is the FYR C-terminal domain; the sequence is GPHLLYEIQS…EKCSKYTPKY (85 aa). One can recognise an SET domain in the interval 3588–3704; that stretch reads DYVGVFRSHI…QGEELTYDYK (117 aa). S-adenosyl-L-methionine contacts are provided by histidine 3598 and arginine 3600. Cysteine 3641 is modified (S-methylcysteine; by autocatalysis). S-adenosyl-L-methionine-binding positions include tyrosine 3642 and 3665 to 3666; that span reads NH. Zn(2+) contacts are provided by cysteine 3668, cysteine 3714, cysteine 3716, and cysteine 3721. The Post-SET domain maps to 3710-3726; the sequence is EKIPCSCGSKRCRKYLN.

It belongs to the class V-like SAM-binding methyltransferase superfamily. Histone-lysine methyltransferase family. TRX/MLL subfamily. In terms of assembly, interacts (via SET domain) with ash1 (via SET domain). Interacts with Nup98. Maternal isoforms are expressed in syncytial blastoderm, confined to the ventral region fated to become mesoderm. An additional broad domain of expression arises during cellularization and is quickly resolved into four pair-rule-like stripes in the posterior half of the embryo.

It is found in the nucleus. It localises to the chromosome. It carries out the reaction L-lysyl(9)-[histone H3] + 3 S-adenosyl-L-methionine = N(6),N(6),N(6)-trimethyl-L-lysyl(9)-[histone H3] + 3 S-adenosyl-L-homocysteine + 3 H(+). The catalysed reaction is L-cysteinyl-[protein] + S-adenosyl-L-methionine = S-methyl-L-cysteinyl-[protein] + S-adenosyl-L-homocysteine + H(+). Functionally, histone methyltransferase that methylates 'Lys-4' of histone H3 (H3K4me). H3K4me represents a specific tag for epigenetic transcriptional activation. Functions in segment determination through interaction with genes of bithorax (BX-C) and antennapedia (ANT-C) complexes. Acts as an activator of BX-C. Involved in the very early regulation of homeotic genes expressed only in the posterior region of the embryo. Also has auto-methylation activity on Cys-3641. This Drosophila melanogaster (Fruit fly) protein is Histone-lysine N-methyltransferase trithorax.